Reading from the N-terminus, the 581-residue chain is Arginine--tRNA ligase (581 aa).

The short motif at 126–136 (PNLAKEMHVGH) is the 'HIGH' region element.

Belongs to the class-I aminoacyl-tRNA synthetase family. In terms of assembly, monomer.

It localises to the cytoplasm. It catalyses the reaction tRNA(Arg) + L-arginine + ATP = L-arginyl-tRNA(Arg) + AMP + diphosphate. This Shewanella oneidensis (strain ATCC 700550 / JCM 31522 / CIP 106686 / LMG 19005 / NCIMB 14063 / MR-1) protein is Arginine--tRNA ligase.